We begin with the raw amino-acid sequence, 349 residues long: Secretory carrier-associated membrane protein 3 (349 aa).

A disordered region spans residues 1–90; the sequence is MAQSRDTGNP…EPRNYGSYST (90 aa). At 1 to 168 the chain is on the cytoplasmic side; the sequence is MAQSRDTGNP…PQEFQKTVST (168 aa). Position 32 is a phosphoserine (Ser32). Thr37 carries the post-translational modification Phosphothreonine. Phosphotyrosine is present on residues Tyr41 and Tyr53. Positions 49 to 68 are enriched in pro residues; the sequence is PPPAYEPPAPAPAPLPPPSA. Phosphoserine occurs at positions 74 and 78. A Phosphotyrosine modification is found at Tyr85. Ser87 bears the Phosphoserine mark. The next 4 helical transmembrane spans lie at 169 to 189, 200 to 220, 236 to 256, and 277 to 297; these read MYYL…ACLA, GFGL…VCWY, FVFF…AIGI, and VAVL…LGIV. Topologically, residues 298–349 are cytoplasmic; that stretch reads MLKRIHSLYRQTGASFQKAQQEFAAGVFSNPAVRTAAANAAAGAAENAFRAP. Lys315 is covalently cross-linked (Glycyl lysine isopeptide (Lys-Gly) (interchain with G-Cter in SUMO1)).

It belongs to the SCAMP family. As to quaternary structure, interacts with NEDD4 and NEDD4L and TSG101. Interacts with RNF126. In terms of processing, monoubiquitinated.

It localises to the membrane. In terms of biological role, functions in post-Golgi recycling pathways. Acts as a recycling carrier to the cell surface. The sequence is that of Secretory carrier-associated membrane protein 3 (Scamp3) from Mus musculus (Mouse).